The following is a 756-amino-acid chain: 5-methyltetrahydropteroyltriglutamate--homocysteine methyltransferase (756 aa).

5-methyltetrahydropteroyltri-L-glutamate contacts are provided by residues 16–19 (RELK) and lysine 112. L-homocysteine contacts are provided by residues 432-434 (IGS) and glutamate 485. L-methionine-binding positions include 432–434 (IGS) and glutamate 485. 5-methyltetrahydropteroyltri-L-glutamate contacts are provided by residues 516–517 (RC) and tryptophan 562. Aspartate 600 lines the L-homocysteine pocket. Position 600 (aspartate 600) interacts with L-methionine. A 5-methyltetrahydropteroyltri-L-glutamate-binding site is contributed by glutamate 606. Residues histidine 642, cysteine 644, and glutamate 666 each contribute to the Zn(2+) site. Histidine 695 (proton donor) is an active-site residue. Cysteine 727 contacts Zn(2+).

The protein belongs to the vitamin-B12 independent methionine synthase family. Zn(2+) serves as cofactor.

It carries out the reaction 5-methyltetrahydropteroyltri-L-glutamate + L-homocysteine = tetrahydropteroyltri-L-glutamate + L-methionine. Its pathway is amino-acid biosynthesis; L-methionine biosynthesis via de novo pathway; L-methionine from L-homocysteine (MetE route): step 1/1. Its function is as follows. Catalyzes the transfer of a methyl group from 5-methyltetrahydrofolate to homocysteine resulting in methionine formation. The chain is 5-methyltetrahydropteroyltriglutamate--homocysteine methyltransferase from Haemophilus influenzae (strain PittGG).